We begin with the raw amino-acid sequence, 135 residues long: Large ribosomal subunit protein uL16m (135 aa).

It belongs to the universal ribosomal protein uL16 family.

The protein resides in the mitochondrion. The polypeptide is Large ribosomal subunit protein uL16m (RPL16) (Prototheca wickerhamii).